The primary structure comprises 443 residues: Oxygen-dependent coproporphyrinogen-III oxidase, mitochondrial (443 aa).

Residues 1 to 98 constitute a mitochondrion transit peptide; that stretch reads MALRLGQLGS…EMVPKSSGAR (98 aa). The segment at 90–111 is disordered; it reads MVPKSSGARSPSPGRLEEDGDE. Ser101 carries the post-translational modification Phosphoserine. The tract at residues 182 to 191 is important for dimerization; that stretch reads VLQDGRVFEK. Ser233 contacts coproporphyrinogen III. The Proton donor role is filled by His247. Residue 249–251 participates in coproporphyrinogen III binding; sequence NYR. The tract at residues 381–417 is important for dimerization; the sequence is YVEFNLVYDRGTKFGLFTPGSRIESILMSLPLTARWE. Lys393 is modified (N6-acetyllysine; alternate). An N6-succinyllysine; alternate modification is found at Lys393. Residue 400–402 participates in coproporphyrinogen III binding; sequence GSR.

Belongs to the aerobic coproporphyrinogen-III oxidase family. Homodimer.

Its subcellular location is the mitochondrion intermembrane space. It carries out the reaction coproporphyrinogen III + O2 + 2 H(+) = protoporphyrinogen IX + 2 CO2 + 2 H2O. It functions in the pathway porphyrin-containing compound metabolism; protoporphyrin-IX biosynthesis; protoporphyrinogen-IX from coproporphyrinogen-III (O2 route): step 1/1. Involved in the heme biosynthesis. Catalyzes the aerobic oxidative decarboxylation of propionate groups of rings A and B of coproporphyrinogen-III to yield the vinyl groups in protoporphyrinogen-IX. The chain is Oxygen-dependent coproporphyrinogen-III oxidase, mitochondrial from Rattus norvegicus (Rat).